Reading from the N-terminus, the 213-residue chain is uncharacterized protein (213 aa).

This is an uncharacterized protein from Escherichia coli (strain UTI89 / UPEC).